Consider the following 273-residue polypeptide: 4-hydroxy-tetrahydrodipicolinate reductase (273 aa).

NAD(+) is bound by residues 12–17 (GAGGRM) and Glu38. Position 39 (Arg39) interacts with NADP(+). NAD(+) is bound by residues 102-104 (GTT) and 126-129 (AANF). His159 serves as the catalytic Proton donor/acceptor. His160 contacts (S)-2,3,4,5-tetrahydrodipicolinate. Residue Lys163 is the Proton donor of the active site. Residue 169–170 (GT) participates in (S)-2,3,4,5-tetrahydrodipicolinate binding.

Belongs to the DapB family. In terms of assembly, homotetramer.

The protein localises to the cytoplasm. The enzyme catalyses (S)-2,3,4,5-tetrahydrodipicolinate + NAD(+) + H2O = (2S,4S)-4-hydroxy-2,3,4,5-tetrahydrodipicolinate + NADH + H(+). It carries out the reaction (S)-2,3,4,5-tetrahydrodipicolinate + NADP(+) + H2O = (2S,4S)-4-hydroxy-2,3,4,5-tetrahydrodipicolinate + NADPH + H(+). The protein operates within amino-acid biosynthesis; L-lysine biosynthesis via DAP pathway; (S)-tetrahydrodipicolinate from L-aspartate: step 4/4. In terms of biological role, catalyzes the conversion of 4-hydroxy-tetrahydrodipicolinate (HTPA) to tetrahydrodipicolinate. This Klebsiella pneumoniae subsp. pneumoniae (strain ATCC 700721 / MGH 78578) protein is 4-hydroxy-tetrahydrodipicolinate reductase.